The following is a 292-amino-acid chain: Nucleotide-binding protein Ldb0621 (292 aa).

Position 14–21 (14–21) interacts with ATP; it reads GMSGAGKT. A GTP-binding site is contributed by 64–67; that stretch reads DLRV.

The protein belongs to the RapZ-like family.

Functionally, displays ATPase and GTPase activities. This Lactobacillus delbrueckii subsp. bulgaricus (strain ATCC 11842 / DSM 20081 / BCRC 10696 / JCM 1002 / NBRC 13953 / NCIMB 11778 / NCTC 12712 / WDCM 00102 / Lb 14) protein is Nucleotide-binding protein Ldb0621.